Reading from the N-terminus, the 226-residue chain is Ribonuclease 3 (226 aa).

Positions 6 to 128 (INRLQRKLGY…LIGGVFLDSD (123 aa)) constitute an RNase III domain. Mg(2+) is bound at residue E41. D45 is an active-site residue. Positions 114 and 117 each coordinate Mg(2+). Residue E117 is part of the active site. In terms of domain architecture, DRBM spans 155–225 (DPKTRLQEYL…AEQALKMLEL (71 aa)).

It belongs to the ribonuclease III family. As to quaternary structure, homodimer. It depends on Mg(2+) as a cofactor.

It is found in the cytoplasm. It catalyses the reaction Endonucleolytic cleavage to 5'-phosphomonoester.. In terms of biological role, digests double-stranded RNA. Involved in the processing of primary rRNA transcript to yield the immediate precursors to the large and small rRNAs (23S and 16S). Processes some mRNAs, and tRNAs when they are encoded in the rRNA operon. Processes pre-crRNA and tracrRNA of type II CRISPR loci if present in the organism. The polypeptide is Ribonuclease 3 (Enterobacter sp. (strain 638)).